A 2359-amino-acid polypeptide reads, in one-letter code: Voltage-dependent T-type calcium channel subunit alpha-1H (2359 aa).

Residues 1–63 are disordered; it reads MTEGTLAADE…PGTECGADLG (63 aa). Residues 1–100 are Cytoplasmic-facing; it reads MTEGTLAADE…SWCLRLVCNP (100 aa). The segment covering 24-36 has biased composition (low complexity); that stretch reads APVRASPASPGAP. One copy of the I repeat lies at 87 to 422; that stretch reads TRPRSWCLRL…LCLVVIATQF (336 aa). The helical transmembrane segment at 101–119 threads the bilayer; that stretch reads WFEHISMLVIMLNCVTLGM. Residues 120-141 are Extracellular-facing; that stretch reads FRPCEDVECRSERCSILEAFDD. Zn(2+) is bound at residue Asp-140. The chain crosses the membrane as a helical span at residues 142–160; the sequence is FIFAFFAVEMVIKMVALGL. Over 161-169 the chain is Cytoplasmic; it reads FGQKCYLGD. The helical transmembrane segment at 170 to 184 threads the bilayer; that stretch reads TWNRLDFFIVMAGMM. The Extracellular portion of the chain corresponds to 185–193; that stretch reads EYSLDGHNV. The Zn(2+) site is built by Asp-189 and His-191. Residue Asn-192 is glycosylated (N-linked (GlcNAc...) asparagine). Residues 194–212 form a helical membrane-spanning segment; it reads SLSAIRTVRVLRPLRAINR. The Cytoplasmic segment spans residues 213 to 232; the sequence is VPSMRILVTLLLDTLPMLGN. A helical transmembrane segment spans residues 233-253; sequence VLLLCFFVFFIFGIVGVQLWA. Residues 254–394 lie on the Extracellular side of the membrane; it reads GLLRNRCFLD…YYVMDAHSFY (141 aa). N-linked (GlcNAc...) asparagine glycosylation occurs at Asn-271. The helical transmembrane segment at 395–419 threads the bilayer; the sequence is NFIYFILLIIMGSFFMINLCLVVIA. The Cytoplasmic portion of the chain corresponds to 420–790; that stretch reads TQFSETKQRE…GKLRRIVDSK (371 aa). Disordered stretches follow at residues 490-573, 620-656, and 737-769; these read VDPS…SESV, GTVN…SPRP, and GDCR…ASQP. A compositionally biased stretch (basic residues) spans 503 to 532; that stretch reads RRPRRAGRRTASVHHLVYHHHHHHHHHYHF. Positions 557-566 are enriched in pro residues; the sequence is PPSPPSPGHG. The span at 620–631 shows a compositional bias: polar residues; it reads GTVNSKGGTSSR. The II repeat unit spans residues 776–1015; that stretch reads WASFSGKLRR…LLVAILVEGF (240 aa). A helical transmembrane segment spans residues 791 to 811; it reads YFNRGIMAAILVNTLSMGVEY. Residues 812-824 are Extracellular-facing; that stretch reads HEQPEELTNALEI. The helical transmembrane segment at 825-846 threads the bilayer; the sequence is SNIVFTSMFALEMLLKLLACGP. The Cytoplasmic segment spans residues 847–852; that stretch reads LGYIRN. Residues 853–871 traverse the membrane as a helical segment; sequence PYNIFDGIVVVISVWEIVG. The Extracellular portion of the chain corresponds to 872-879; that stretch reads QANGGLSV. The chain crosses the membrane as a helical span at residues 880-903; sequence LRTFRLLRVLKLVRFLPALRRQLV. The Cytoplasmic portion of the chain corresponds to 904–914; it reads VLMRTMDNVAT. Residues 915–935 form a helical membrane-spanning segment; the sequence is FCMLLMLFIFIFSILGMHLFG. The Extracellular portion of the chain corresponds to 936–987; the sequence is CKFSLKTDSGDTVPDRKNFDSLLWAIVTVFQILTQEDWNVVLYNGMASTSSW. Residues 988–1012 form a helical membrane-spanning segment; sequence AALYFVALMTFGNYVLFNLLVAILV. The Cytoplasmic portion of the chain corresponds to 1013–1301; it reads EGFQAEGDAT…NRLRVSCQKV (289 aa). The disordered stretch occupies residues 1061–1197; sequence GHLEGRGSLP…GASPGPRATP (137 aa). The segment covering 1117-1126 has biased composition (polar residues); the sequence is SLASLRSSPC. Positions 1130-1147 are enriched in low complexity; that stretch reads GPNSAGSSRRSSWNSLGR. The III repeat unit spans residues 1292–1569; that stretch reads NRLRVSCQKV…MFVGVVVENF (278 aa). A helical membrane pass occupies residues 1302 to 1324; it reads IAHKMFDHVVLVFIFLNCITIAL. Topologically, residues 1325–1342 are extracellular; that stretch reads ERPDIDPGSTERAFLSVS. A helical transmembrane segment spans residues 1343–1363; sequence NYIFTAIFVVEMMVKVVALGL. Over 1364-1373 the chain is Cytoplasmic; sequence LWGEHAYLQS. The chain crosses the membrane as a helical span at residues 1374 to 1393; that stretch reads SWNVLDGLLVLVSLVDIIVA. Topologically, residues 1394–1407 are extracellular; the sequence is MASAGGAKILGVLR. Residues 1408–1429 traverse the membrane as a helical segment; it reads VLRLLRTLRPLRVISRAPGLKL. Residues 1430–1439 are Cytoplasmic-facing; it reads VVETLISSLR. Residues 1440–1463 form a helical membrane-spanning segment; sequence PIGNIVLICCAFFIIFGILGVQLF. At 1464-1540 the chain is on the extracellular side; sequence KGKFYYCEGT…DQQPVQNHNP (77 aa). The N-linked (GlcNAc...) asparagine glycan is linked to Asn-1477. The helical transmembrane segment at 1541 to 1566 threads the bilayer; sequence WMLLYFISFLLIVSFFVLNMFVGVVV. Over 1567–1621 the chain is Cytoplasmic; that stretch reads ENFHKCRQHQEAEEARRREEKRLRRLERRRRKAQRRPYYADYSHTRRSIHSLCTS. An IV repeat occupies 1607–1868; sequence DYSHTRRSIH…VVVAVLMKHL (262 aa). A helical membrane pass occupies residues 1622–1642; that stretch reads HYLDLFITFIICLNVITMSME. The Extracellular segment spans residues 1643–1656; that stretch reads HYNQPKSLDEALKY. A helical membrane pass occupies residues 1657-1678; the sequence is CNYVFTIVFVFEAALKLVAFGF. Over 1679-1685 the chain is Cytoplasmic; it reads RRFFKDR. Residues 1686–1704 traverse the membrane as a helical segment; it reads WNQLDLAIVLLSIMGIALE. At 1705 to 1718 the chain is on the extracellular side; sequence EIEMNAALPINPTI. A helical membrane pass occupies residues 1719–1742; that stretch reads IRIMRVLRIARVLKLLKMATGMRA. The Cytoplasmic segment spans residues 1743 to 1756; that stretch reads LLDTVVQALPQVGN. A helical membrane pass occupies residues 1757–1777; sequence LGLLFMLLFFIYAALGVELFG. Residues 1778 to 1840 are Extracellular-facing; the sequence is RLECSEDNPC…KHCLSYLPAL (63 aa). The chain crosses the membrane as a helical span at residues 1841–1868; the sequence is SPVYFVTFMLVAQFVLVNVVVAVLMKHL. Over 1869–2359 the chain is Cytoplasmic; that stretch reads EESNKEARED…APDDSGDEPV (491 aa). Over residues 1891 to 1911 the composition is skewed to polar residues; sequence QGSTAQPPPTAQESQGTQPDT. 4 disordered regions span residues 1891–1913, 1974–2003, 2016–2258, and 2335–2359; these read QGST…DTPN, SFQV…PRSL, HSES…GERW, and PQTP…DEPV. Basic and acidic residues predominate over residues 2016–2026; the sequence is HSESLEGKVDD. Positions 2086 to 2096 are enriched in acidic residues; that stretch reads DEAEAADPADE. The segment covering 2166 to 2181 has biased composition (basic and acidic residues); sequence GESHLESGEVRGRASE.

It belongs to the calcium channel alpha-1 subunit (TC 1.A.1.11) family. CACNA1H subfamily. As to quaternary structure, interacts (via N-terminal cytoplasmic domain) with STAC. In terms of processing, in response to raising of intracellular calcium, the T-type channels are activated by CaM-kinase II. In terms of tissue distribution, expressed in brain.

The protein resides in the cell membrane. It carries out the reaction Ca(2+)(in) = Ca(2+)(out). Voltage-sensitive calcium channel that gives rise to T-type calcium currents. T-type calcium channels belong to the 'low-voltage activated (LVA)' group. A particularity of this type of channel is an opening at quite negative potentials, and a voltage-dependent inactivation. T-type channels serve pacemaking functions in both central neurons and cardiac nodal cells and support calcium signaling in secretory cells and vascular smooth muscle. They may also be involved in the modulation of firing patterns of neurons. In the adrenal zona glomerulosa, participates in the signaling pathway leading to aldosterone production in response to either AGT/angiotensin II, or hyperkalemia. The polypeptide is Voltage-dependent T-type calcium channel subunit alpha-1H (Cacna1h) (Rattus norvegicus (Rat)).